The following is an 88-amino-acid chain: Putative membrane protein insertion efficiency factor (88 aa).

The disordered stretch occupies residues 68-88 (VPPKKDKNADSEHSCKVHHHH). The span at 69–82 (PPKKDKNADSEHSC) shows a compositional bias: basic and acidic residues.

The protein belongs to the UPF0161 family.

The protein localises to the cell membrane. Its function is as follows. Could be involved in insertion of integral membrane proteins into the membrane. In Listeria monocytogenes serovar 1/2a (strain ATCC BAA-679 / EGD-e), this protein is Putative membrane protein insertion efficiency factor.